The primary structure comprises 86 residues: Small ribosomal subunit protein bS16 (86 aa).

It belongs to the bacterial ribosomal protein bS16 family.

In Stenotrophomonas maltophilia (strain K279a), this protein is Small ribosomal subunit protein bS16.